Reading from the N-terminus, the 1278-residue chain is ABC transporter B family member 11 (1278 aa).

Composition is skewed to basic and acidic residues over residues 1 to 13 (MNGD…DSVS) and 21 to 35 (SPKE…EKSE). Positions 1-35 (MNGDGAREGDSVSHEPSTSKSPKEGEETKKEEKSE) are disordered. The next 6 membrane-spanning stretches (helical) occupy residues 55 to 75 (VLLM…LPFM), 106 to 126 (FVYL…CWMI), 182 to 202 (FIQL…KGWL), 205 to 225 (LVML…ALIV), 285 to 305 (GLGL…AIWF), and 314 to 334 (GYTG…SMSL). The ABC transmembrane type-1 1 domain occupies 58–346 (MICGSIGAIG…TSPCVTAFAA (289 aa)). The ABC transporter 1 domain occupies 381–617 (IELKDVHFSY…SEGAYSQLIR (237 aa)). 416–423 (GESGSGKS) contacts ATP. N-linked (GlcNAc...) asparagine glycosylation is found at N483, N568, and N653. The segment covering 629–654 (ELSSGSSFRNSNLKKSMEGTSSVGNS) has biased composition (polar residues). Positions 629-656 (ELSSGSSFRNSNLKKSMEGTSSVGNSSR) are disordered. In terms of domain architecture, ABC transmembrane type-1 2 spans 710 to 997 (LLLGTVAAAI…SSTFAPDSSK (288 aa)). Transmembrane regions (helical) follow at residues 711-731 (LLGT…GILI) and 751-771 (FWAI…PTQM). N806 carries an N-linked (GlcNAc...) asparagine glycan. Transmembrane regions (helical) follow at residues 824–844 (ALVG…ASGL), 845–865 (IIAF…LPLI), 932–952 (GFIS…VYAT), and 971–991 (VFQV…SSTF). Positions 1032 to 1271 (IELRHLSFTY…EGGVYASLVQ (240 aa)) constitute an ABC transporter 2 domain. 1067-1074 (GESGSGKS) provides a ligand contact to ATP. N1121 and N1222 each carry an N-linked (GlcNAc...) asparagine glycan.

It belongs to the ABC transporter superfamily. ABCB family. Multidrug resistance exporter (TC 3.A.1.201) subfamily. As to expression, present in roots and flower buds.

Its subcellular location is the membrane. It carries out the reaction (indol-3-yl)acetate(in) + ATP + H2O = (indol-3-yl)acetate(out) + ADP + phosphate + H(+). Functionally, involved in the regulation of auxin transport required for pistil elongation. This is ABC transporter B family member 11 from Arabidopsis thaliana (Mouse-ear cress).